Consider the following 334-residue polypeptide: Protein U17/U16 (334 aa).

Belongs to the herpesviridae US22 family. Isoform 1 is not glycosylated.

In terms of biological role, isoform 3 can transactivate the human immunodeficiency virus type 1 promoter. The polypeptide is Protein U17/U16 (U17/U16) (Homo sapiens (Human)).